The sequence spans 432 residues: 3-phosphoshikimate 1-carboxyvinyltransferase (432 aa).

Positions 22, 23, and 27 each coordinate 3-phosphoshikimate. Phosphoenolpyruvate is bound at residue Lys-22. Residues Gly-96 and Arg-127 each coordinate phosphoenolpyruvate. 3-phosphoshikimate contacts are provided by Ser-173, Ser-174, Gln-175, Ser-201, Asp-316, Asn-339, and Lys-343. Gln-175 serves as a coordination point for phosphoenolpyruvate. Asp-316 functions as the Proton acceptor in the catalytic mechanism. Residues Arg-347, Arg-391, and Lys-416 each contribute to the phosphoenolpyruvate site.

This sequence belongs to the EPSP synthase family. As to quaternary structure, monomer.

It localises to the cytoplasm. The enzyme catalyses 3-phosphoshikimate + phosphoenolpyruvate = 5-O-(1-carboxyvinyl)-3-phosphoshikimate + phosphate. Its pathway is metabolic intermediate biosynthesis; chorismate biosynthesis; chorismate from D-erythrose 4-phosphate and phosphoenolpyruvate: step 6/7. Catalyzes the transfer of the enolpyruvyl moiety of phosphoenolpyruvate (PEP) to the 5-hydroxyl of shikimate-3-phosphate (S3P) to produce enolpyruvyl shikimate-3-phosphate and inorganic phosphate. The chain is 3-phosphoshikimate 1-carboxyvinyltransferase from Histophilus somni (strain 2336) (Haemophilus somnus).